The primary structure comprises 753 residues: Polyribonucleotide nucleotidyltransferase (753 aa).

Mg(2+) is bound by residues Asp523 and Asp529. A KH domain is found at 589–648 (PRIISVRIPVDKIGAVIGPKGAMINQIQDDTGADITIEDDGTVLIGATDGASAEAARSAV). Residues 660 to 732 (GERYLGTVVK…DRGKLSLSPV (73 aa)) form the S1 motif domain. The tract at residues 733-753 (GAESDAVAETADAIESSQTEA) is disordered.

Belongs to the polyribonucleotide nucleotidyltransferase family. Requires Mg(2+) as cofactor.

Its subcellular location is the cytoplasm. It carries out the reaction RNA(n+1) + phosphate = RNA(n) + a ribonucleoside 5'-diphosphate. Its function is as follows. Involved in mRNA degradation. Catalyzes the phosphorolysis of single-stranded polyribonucleotides processively in the 3'- to 5'-direction. This is Polyribonucleotide nucleotidyltransferase from Micrococcus luteus (strain ATCC 4698 / DSM 20030 / JCM 1464 / CCM 169 / CCUG 5858 / IAM 1056 / NBRC 3333 / NCIMB 9278 / NCTC 2665 / VKM Ac-2230) (Micrococcus lysodeikticus).